Consider the following 437-residue polypeptide: Testis-specific Y-encoded-like protein 1 (437 aa).

The segment at 1-81 (MSGLDGVKRT…QDAAGRGGTP (81 aa)) is disordered. Positions 11 to 26 (TPLQTHSIIISDQVPS) are enriched in polar residues. Basic and acidic residues predominate over residues 28 to 40 (QDAHQYLRLRDQS). Lysine 156 participates in a covalent cross-link: Glycyl lysine isopeptide (Lys-Gly) (interchain with G-Cter in SUMO2).

The protein belongs to the nucleosome assembly protein (NAP) family. Post-translationally, ubiquitinated by the CRL2(APPBP2) complex, which recognizes the Arg-Xaa-Xaa-Gly sequence at the C-terminus, leading to its degradation. As to expression, expressed in testis, ovary, liver, spleen, brain, kidney, prostate, lung, liver, and heart.

It localises to the nucleus. Its subcellular location is the nucleolus. This Homo sapiens (Human) protein is Testis-specific Y-encoded-like protein 1 (TSPYL1).